The primary structure comprises 1013 residues: Probable beta-galactosidase B (1013 aa).

The first 21 residues, 1-21, serve as a signal peptide directing secretion; sequence MTRILNCLLVLLACLGVSSKA. A substrate-binding site is contributed by Tyr90. Asn100 carries N-linked (GlcNAc...) asparagine glycosylation. Substrate is bound by residues Asn135, Ala136, Glu137, and Asn195. Glu196 (proton donor) is an active-site residue. N-linked (GlcNAc...) asparagine glycosylation occurs at Asn211. Substrate is bound at residue Tyr265. Cysteines 271 and 324 form a disulfide. The active-site Nucleophile is Glu308. Tyr373 lines the substrate pocket. N-linked (GlcNAc...) asparagine glycosylation is found at Asn411, Asn442, Asn456, Asn626, Asn735, Asn768, and Asn775.

This sequence belongs to the glycosyl hydrolase 35 family.

It localises to the secreted. The enzyme catalyses Hydrolysis of terminal non-reducing beta-D-galactose residues in beta-D-galactosides.. Its function is as follows. Cleaves beta-linked terminal galactosyl residues from gangliosides, glycoproteins, and glycosaminoglycans. This is Probable beta-galactosidase B (lacB) from Penicillium rubens (strain ATCC 28089 / DSM 1075 / NRRL 1951 / Wisconsin 54-1255) (Penicillium chrysogenum).